The primary structure comprises 492 residues: Probable small intestine urate exporter (492 aa).

Positions 1 to 20 (MSTGADLKAREGDIPSDNMT) are disordered. Residues Asn-18, Asn-44, Asn-53, Asn-63, Asn-72, and Asn-87 are each glycosylated (N-linked (GlcNAc...) asparagine). 11 helical membrane passes run 112–132 (LSYGSFIAPIPTGYVAGVFGA), 134–154 (YVVGLGLLISSVLTLFIPLAA), 156–176 (AGVALLIVLRVIQGMAQVMVL), 198–218 (IAASGSMLGTFLVLIAGGLIC), 225–245 (YIFYIFGGIGCACCLLWFPLV), 287–307 (LPLWAIVVSYFCEYWLLSTVM), 327–347 (ILSALPFMFGCVCIILGGLLA), 363–383 (KLFTAVGVLASSGILLPLPWV), 393–413 (FLVLSSVFASLCDSGALINFL), 426–446 (LLQVFSYLAGGIAPTVAGFFI), and 456–476 (NVFFLAAAIDVVGLLFYLIFS).

This sequence belongs to the major facilitator superfamily. Sodium/anion cotransporter family. Expressed in the small intestine (at protein level).

The protein localises to the apical cell membrane. The catalysed reaction is 3 Na(+)(out) + phosphate(out) = 3 Na(+)(in) + phosphate(in). The enzyme catalyses urate(out) + n chloride(in) = urate(in) + n chloride(out). It carries out the reaction L-thyroxine(out) = L-thyroxine(in). It catalyses the reaction 3,3',5-triiodo-L-thyronine(out) = 3,3',5-triiodo-L-thyronine(in). In terms of biological role, acts as a membrane potential-dependent organic anion transporter, the transport requires a low concentration of chloride ions. Mediates chloride-dependent transport of urate. Mediates sodium-independent high affinity transport of thyroid hormones including L-thyroxine (T4) and 3,3',5-triiodo-L-thyronine (T3). Can actively transport inorganic phosphate into cells via Na(+) cotransport. The protein is Probable small intestine urate exporter (Slc17a4) of Mus musculus (Mouse).